A 612-amino-acid polypeptide reads, in one-letter code: Putative pentatricopeptide repeat-containing protein At5g40405 (612 aa).

PPR repeat units lie at residues 70–104, 107–141, 142–172, 173–203, 204–238, 239–273, 274–304, 305–339, 340–375, and 376–410; these read TLFALNSMIRAHCKSPVPEKSFDFYRRILSSGNDL, DNYTVNFLVQACTGLRMRETGLQVHGMTIRRGFDN, DPHVQTGLISLYAELGCLDSCHKVFNSIPCP, DFVCRTAMVTACARCGDVVFARKLFEGMPER, DPIAWNAMISGYAQVGESREALNVFHLMQLEGVKV, NGVAMISVLSACTQLGALDQGRWAHSYIERNKIKI, TVRLATTLVDLYAKCGDMEKAMEVFWGMEEK, NVYTWSSALNGLAMNGFGEKCLELFSLMKQDGVTP, NAVTFVSVLRGCSVVGFVDEGQRHFDSMRNEFGIEP, and QLEHYGCLVDLYARAGRLEDAVSIIQQMPMKPHAA. The type E motif stretch occupies residues 411–486; sequence VWSSLLHASR…QPGCSVMEVN (76 aa). The segment at 487-517 is type E(+) motif; that stretch reads GEVHEFFVGDKSHPKYTQIDAVWKDISRRLR. The segment at 518 to 612 is type DYW motif; that stretch reads LAGYKADTTP…DGHCSCNGFW (95 aa).

This sequence belongs to the PPR family. PCMP-H subfamily.

The protein is Putative pentatricopeptide repeat-containing protein At5g40405 (PCMP-H14) of Arabidopsis thaliana (Mouse-ear cress).